We begin with the raw amino-acid sequence, 138 residues long: Small ribosomal subunit protein uS11c (138 aa).

The interval 1–23 (MAKPILRIGSRKNTRSGSRKNVR) is disordered. Residues 9–23 (GSRKNTRSGSRKNVR) are compositionally biased toward basic residues.

The protein belongs to the universal ribosomal protein uS11 family. As to quaternary structure, part of the 30S ribosomal subunit.

It is found in the plastid. Its subcellular location is the chloroplast. This Crucihimalaya wallichii (Rock-cress) protein is Small ribosomal subunit protein uS11c.